The following is a 250-amino-acid chain: UDP-2,3-diacylglucosamine hydrolase (250 aa).

Residues D8, H10, D41, N79, and H115 each coordinate Mn(2+). 79-80 contributes to the substrate binding site; that stretch reads NH. Substrate contacts are provided by D123, T165, K168, and H196. Mn(2+) contacts are provided by H196 and H198.

Belongs to the LpxH family. Requires Mn(2+) as cofactor.

Its subcellular location is the cell inner membrane. It carries out the reaction UDP-2-N,3-O-bis[(3R)-3-hydroxytetradecanoyl]-alpha-D-glucosamine + H2O = 2-N,3-O-bis[(3R)-3-hydroxytetradecanoyl]-alpha-D-glucosaminyl 1-phosphate + UMP + 2 H(+). Its pathway is glycolipid biosynthesis; lipid IV(A) biosynthesis; lipid IV(A) from (3R)-3-hydroxytetradecanoyl-[acyl-carrier-protein] and UDP-N-acetyl-alpha-D-glucosamine: step 4/6. In terms of biological role, hydrolyzes the pyrophosphate bond of UDP-2,3-diacylglucosamine to yield 2,3-diacylglucosamine 1-phosphate (lipid X) and UMP by catalyzing the attack of water at the alpha-P atom. Involved in the biosynthesis of lipid A, a phosphorylated glycolipid that anchors the lipopolysaccharide to the outer membrane of the cell. The chain is UDP-2,3-diacylglucosamine hydrolase from Blochmanniella pennsylvanica (strain BPEN).